The chain runs to 79 residues: Sigma-O factor regulatory protein RsoA (79 aa).

In terms of biological role, together with RNA polymerase sigma factor SigO, positively regulates the expression of at least three operons, including oxdC-yvrL, sigO-rsoA and yvrJ. Required for the acid stress-dependent induction of the oxalate decarboxylase oxdC. The sequence is that of Sigma-O factor regulatory protein RsoA (rsoA) from Bacillus subtilis (strain 168).